The chain runs to 962 residues: Putative RNA Helicase B962L (962 aa).

One can recognise a Helicase ATP-binding domain in the interval 43–229; that stretch reads IPTSLADRVL…FGIGKENIIL (187 aa). 56–63 contacts ATP; sequence SRTGSGKS. A DEAH box motif is present at residues 167–170; sequence DEAH. Residues 253-459 enclose the Helicase C-terminal domain; that stretch reads ACETALTIHK…TIKKNKEGVF (207 aa). The chain crosses the membrane as a helical span at residues 521-541; the sequence is GYFWQAAISDIATILAVVSVA.

This sequence belongs to the DEAD box helicase family. DEAH subfamily.

The protein resides in the host membrane. The protein localises to the virion. The catalysed reaction is ATP + H2O = ADP + phosphate + H(+). In African swine fever virus (isolate Tick/South Africa/Pretoriuskop Pr4/1996) (ASFV), this protein is Putative RNA Helicase B962L.